Consider the following 651-residue polypeptide: Methionine--tRNA ligase (651 aa).

Residues 10-20 (AYTNGPLHLGH) carry the 'HIGH' region motif. Cys-142, Cys-145, Cys-154, and Cys-157 together coordinate Zn(2+). The 'KMSKS' region motif lies at 320–324 (KMSTS). ATP is bound at residue Thr-323. The 102-residue stretch at 550 to 651 (YLEKIDLRVG…KDIKAGSKVR (102 aa)) folds into the tRNA-binding domain.

Belongs to the class-I aminoacyl-tRNA synthetase family. MetG type 1 subfamily. Homodimer. Requires Zn(2+) as cofactor.

The protein resides in the cytoplasm. The catalysed reaction is tRNA(Met) + L-methionine + ATP = L-methionyl-tRNA(Met) + AMP + diphosphate. Functionally, is required not only for elongation of protein synthesis but also for the initiation of all mRNA translation through initiator tRNA(fMet) aminoacylation. The polypeptide is Methionine--tRNA ligase (Methanocaldococcus jannaschii (strain ATCC 43067 / DSM 2661 / JAL-1 / JCM 10045 / NBRC 100440) (Methanococcus jannaschii)).